A 301-amino-acid polypeptide reads, in one-letter code: Homeobox protein knotted-1-like 1 (301 aa).

The segment at 141–170 is disordered; it reads CSGATSPPATTATHSDEMVGSSDEDQCSGE. The span at 144-153 shows a compositional bias: low complexity; sequence ATSPPATTAT. Residues 188-208 enclose the ELK domain; the sequence is ELKEMLLKKYSGCLSRLRSEF. The homeobox; TALE-type DNA-binding region spans 209 to 272; it reads LKKRKKGKLP…NQRKRHWKPS (64 aa).

This sequence belongs to the TALE/KNOX homeobox family.

Its subcellular location is the nucleus. Probable transcription factor that may be involved in shoot formation during early embryogenesis. The chain is Homeobox protein knotted-1-like 1 (OSH6) from Oryza sativa subsp. japonica (Rice).